Here is a 199-residue protein sequence, read N- to C-terminus: Protein-methionine-sulfoxide reductase heme-binding subunit MsrQ (199 aa).

Helical transmembrane passes span 13–33, 79–99, 120–140, 147–167, and 169–189; these read VLLH…VDQG, LLGL…ALLE, LGVI…QIMM, WQKL…HYLW, and VKTL…LLLF.

Belongs to the MsrQ family. Heterodimer of a catalytic subunit (MsrP) and a heme-binding subunit (MsrQ). It depends on FMN as a cofactor. The cofactor is heme b.

It localises to the cell inner membrane. Functionally, part of the MsrPQ system that repairs oxidized periplasmic proteins containing methionine sulfoxide residues (Met-O), using respiratory chain electrons. Thus protects these proteins from oxidative-stress damage caused by reactive species of oxygen and chlorine generated by the host defense mechanisms. MsrPQ is essential for the maintenance of envelope integrity under bleach stress, rescuing a wide series of structurally unrelated periplasmic proteins from methionine oxidation. MsrQ provides electrons for reduction to the reductase catalytic subunit MsrP, using the quinone pool of the respiratory chain. The sequence is that of Protein-methionine-sulfoxide reductase heme-binding subunit MsrQ from Pectobacterium carotovorum subsp. carotovorum (strain PC1).